Here is a 348-residue protein sequence, read N- to C-terminus: MADIYRFPKFSYEDNGTVEPLPLRTGPDKKAIPHIRIVKVGDPPKHGVRYLDLLLLGFFETPKQTASLGSVSDLTEHTGYSICGSGSLPIGVAKYHGSDQELLKACTDLRITVRRTVRAGEMIVYMVDSIGAPLLPWSGRLRQGMIFNANKVALAPQCLPVDKDIRFRVVFVNGTSLGAITIAKIPKTLADLALPNSISVNLLVTLKTGIPTEQKGVLPVLDDQGEKKLNFMVHLGLIRRKVGKIYSVEYCKSKIERMRLIFSLGLIGGISFHVQVTGTLSKTFMSQLAWKRAVCFPLMDVNPHMNLVIWAASVEITDVDAVFQPAIPRDFRYYPNVVAKNIGRIRKL.

A YLDL motif motif is present at residues tyrosine 50–leucine 53. Phosphoserine; by host is present on serine 70.

It belongs to the morbillivirus/respirovirus/rubulavirus M protein family. As to quaternary structure, homomultimer. Binds to the cytoplasmic regions of F and HN proteins. Interacts with nucleocapsid. Interacts with human alpha-tubulin and beta-tubulin. Interacts with host ANP32B. A large portion is phosphorylated in the cytoplasm, but not in virion. However, this phosphorylation is not essential for virus replication.

The protein resides in the virion. It is found in the host cytoplasm. Its subcellular location is the host cell membrane. Its function is as follows. Plays a crucial role in virion assembly and budding. Forms a shell at the inner face of the plasma membrane and concentrates the HN and F glycoproteins. Acts as a negative regulator for transcription and replication by sticking to the nucleocapsid. This effect might be regulated by the cytoplasmic interaction with tubulin that dissociates the M protein from the nucleocapsid. The protein is Matrix protein (M) of Cavia cutleri (Guinea pig).